Here is a 294-residue protein sequence, read N- to C-terminus: 4-hydroxybenzoate octaprenyltransferase (294 aa).

A run of 8 helical transmembrane segments spans residues 20 to 42 (LLRI…ALWL), 98 to 118 (WEAV…VVLF), 120 to 140 (NTLT…YPFM), 145 to 165 (HLPQ…AWAA), 175 to 195 (WLLF…YAMV), 218 to 238 (AIIA…GQRA), 242 to 262 (SFYY…QYLA), and 274 to 294 (FLNN…DLAF).

This sequence belongs to the UbiA prenyltransferase family. It depends on Mg(2+) as a cofactor.

It is found in the cell inner membrane. It catalyses the reaction all-trans-octaprenyl diphosphate + 4-hydroxybenzoate = 4-hydroxy-3-(all-trans-octaprenyl)benzoate + diphosphate. Its pathway is cofactor biosynthesis; ubiquinone biosynthesis. Functionally, catalyzes the prenylation of para-hydroxybenzoate (PHB) with an all-trans polyprenyl group. Mediates the second step in the final reaction sequence of ubiquinone-8 (UQ-8) biosynthesis, which is the condensation of the polyisoprenoid side chain with PHB, generating the first membrane-bound Q intermediate 3-octaprenyl-4-hydroxybenzoate. The protein is 4-hydroxybenzoate octaprenyltransferase of Marinobacter nauticus (strain ATCC 700491 / DSM 11845 / VT8) (Marinobacter aquaeolei).